Consider the following 935-residue polypeptide: Clumping factor A (935 aa).

The signal sequence occupies residues 1-39; that stretch reads MNMKKKEKHAIRKKSIGVASVLVGTLIGFGLLSSKEADA. Residues 9–20 carry the YSIRK-G/S signaling motif motif; sequence HAIRKKSIGVAS. Disordered stretches follow at residues 34 to 205 and 529 to 906; these read SKEA…VSQA and FNNG…SEDE. The interval 40–542 is ligand binding A region; that stretch reads SENSVTQSDS…SGSGDGIDKP (503 aa). A compositionally biased stretch (low complexity) spans 47–65; that stretch reads SDSASNESKSNDSSSVSAA. The span at 71–105 shows a compositional bias: polar residues; it reads TNVSDTKTSSNTNNGETSVAQNPAQQETTQSSSTN. Composition is skewed to low complexity over residues 106-132 and 143-162; these read ATTE…ATTQ and NQTS…SVNS. Over residues 163-205 the composition is skewed to polar residues; the sequence is PQNSTNAENVSTTQDTSTEATPSNNESAPQNTDASNKDVVSQA. The span at 547–565 shows a compositional bias: acidic residues; that stretch reads QPDEPGEIEPIPEDSDSDP. The span at 566 to 598 shows a compositional bias: low complexity; the sequence is GSDSGSDSNSDSGSDSGSDSTSDSGSDSASDSD. A compositionally biased stretch (acidic residues) spans 599–863; it reads SASDSDSASD…DNDSDSDSNS (265 aa). The span at 864-882 shows a compositional bias: low complexity; that stretch reads DSESGSNNNVVPPNSPKNG. Basic and acidic residues predominate over residues 889-898; that stretch reads NEAKDSKEPL. The LPXTG sorting signal motif lies at 898 to 902; the sequence is LPDTG. Thr-901 bears the Pentaglycyl murein peptidoglycan amidated threonine mark. A propeptide spans 902 to 935 (removed by sortase); sequence GSEDEANTSLIWGLLASLGSLLLFRRKKENKDKK.

The protein belongs to the serine-aspartate repeat-containing protein (SDr) family.

The protein localises to the secreted. Its subcellular location is the cell wall. Its function is as follows. Cell surface-associated protein implicated in virulence. Promotes bacterial attachment exclusively to the gamma-chain of human fibrinogen. Induces formation of bacterial clumps. This chain is Clumping factor A (clfA), found in Staphylococcus aureus (strain Mu50 / ATCC 700699).